Reading from the N-terminus, the 431-residue chain is 3-phosphoshikimate 1-carboxyvinyltransferase (431 aa).

The 3-phosphoshikimate site is built by K21, S22, and R26. Residue K21 participates in phosphoenolpyruvate binding. Residues G93 and R122 each coordinate phosphoenolpyruvate. 3-phosphoshikimate is bound by residues S167, Q169, D318, and K345. A phosphoenolpyruvate-binding site is contributed by Q169. The active-site Proton acceptor is the D318. Phosphoenolpyruvate-binding residues include R349 and R391.

The protein belongs to the EPSP synthase family. As to quaternary structure, monomer.

Its subcellular location is the cytoplasm. It carries out the reaction 3-phosphoshikimate + phosphoenolpyruvate = 5-O-(1-carboxyvinyl)-3-phosphoshikimate + phosphate. It functions in the pathway metabolic intermediate biosynthesis; chorismate biosynthesis; chorismate from D-erythrose 4-phosphate and phosphoenolpyruvate: step 6/7. Functionally, catalyzes the transfer of the enolpyruvyl moiety of phosphoenolpyruvate (PEP) to the 5-hydroxyl of shikimate-3-phosphate (S3P) to produce enolpyruvyl shikimate-3-phosphate and inorganic phosphate. The chain is 3-phosphoshikimate 1-carboxyvinyltransferase from Roseiflexus castenholzii (strain DSM 13941 / HLO8).